Consider the following 1052-residue polypeptide: Focal adhesion kinase 1 (1052 aa).

The tract at residues 1 to 27 is disordered; the sequence is MAAAYLDPNLNHTPSSSTKTHLGTGME. Alanine 2 carries the N-acetylalanine modification. A Phosphotyrosine modification is found at tyrosine 5. Residues 10 to 21 are compositionally biased toward polar residues; it reads LNHTPSSSTKTH. Threonine 13 is subject to Phosphothreonine. Phosphoserine occurs at positions 29 and 54. The region spanning 35–355 is the FERM domain; that stretch reads RVLKVFHYFE…GYCRLVNGAT (321 aa). Lysine 152 participates in a covalent cross-link: Glycyl lysine isopeptide (Lys-Gly) (interchain with G-Cter in SUMO). Phosphotyrosine is present on residues tyrosine 397 and tyrosine 407. Tyrosine 397 carries the post-translational modification Phosphotyrosine; by autocatalysis. Residues 428-434, lysine 454, and 500-502 each bind ATP; these read IGEGQFG and ELC. The 250-residue stretch at 431-680 folds into the Protein kinase domain; sequence GQFGDVHQGV…ELKAQLSTIL (250 aa). The active-site Proton acceptor is the aspartate 546. Tyrosine 570 bears the Phosphotyrosine mark. Tyrosine 576 and tyrosine 577 each carry phosphotyrosine; by RET and SRC. Position 580 is a phosphoserine (serine 580). The segment covering 685 to 697 has biased composition (basic and acidic residues); that stretch reads VQQEERMRMESRR. Disordered stretches follow at residues 685–734 and 837–921; these read VQQE…PSPQ and VRLS…DRSN. The interaction with TGFB1I1 stretch occupies residues 707-1052; the sequence is GSDEAPPKPS…LKMLGQTRPH (346 aa). Phosphoserine is present on serine 722. A Phosphoserine; by CDK5 modification is found at serine 732. Positions 837-849 are enriched in basic and acidic residues; sequence VRLSRGSIDREDG. Serine 843 carries the phosphoserine modification. The residue at position 861 (tyrosine 861) is a Phosphotyrosine. The segment covering 869–880 has biased composition (pro residues); it reads PAAPPKKPPRPG. Positions 886–896 are enriched in polar residues; that stretch reads SNLSSISSPAD. Phosphoserine is present on serine 910. The tract at residues 912-1052 is interaction with ARHGEF28; the sequence is PPTANLDRSN…LKMLGQTRPH (141 aa). Threonine 914 carries the post-translational modification Phosphothreonine. Tyrosine 925 is subject to Phosphotyrosine; by SRC.

The protein belongs to the protein kinase superfamily. Tyr protein kinase family. FAK subfamily. In terms of assembly, interacts with GIT1. Component of a complex that contains at least FER, CTTN and PTK2/FAK1. Interacts with BMX. Interacts with STEAP4. Interacts with ZFYVE21. Interacts with ESR1. Interacts with FGR, FLT4 and RET. Interacts with EPHA2 in resting cells; activation of EPHA2 recruits PTPN11, leading to dephosphorylation of PTK2/FAK1 and dissociation of the complex. Interacts with EPHA1 (kinase activity-dependent). Interacts with MISP. Interacts with PIAS1. Interacts with ARHGAP26 and SHC1. Interacts with RB1CC1; this inhibits PTK2/FAK1 activity and activation of downstream signaling pathways. Interacts with P53/TP53. Interacts with STAT1. Interacts with WASL. Interacts with ARHGEF7. Interacts with DCC. Interacts (via first Pro-rich region) with CAS family members (via SH3 domain), including BCAR1, BCAR3 and CASS4. Interacts with NEDD9 (via C-terminus). Interacts with SORBS1. Interacts with ARHGEF28. Interacts with SHB. Part of a complex composed of THSD1, PTK2/FAK1, TLN1 and VCL. Interacts with PXN and TLN1. Interacts with TGFB1I1. Interacts with PIK3R1 or PIK3R2. Interacts with SRC, GRB2 and GRB7. Interacts with LPXN (via LD motif 3). Interacts with CD36. Interacts with EMP2; regulates PTK2 activation and localization. Interacts with DSCAM. Interacts with AMBRA1. Interacts (when tyrosine-phosphorylated) with tensin TNS1; the interaction is increased by phosphorylation of TNS1. In terms of processing, phosphorylated on tyrosine residues upon activation, e.g. upon integrin signaling. Tyr-397 is the major autophosphorylation site, but other kinases can also phosphorylate this residue. Phosphorylation at Tyr-397 promotes interaction with SRC and SRC family members, leading to phosphorylation at Tyr-576, Tyr-577 and at additional tyrosine residues. FGR promotes phosphorylation at Tyr-397 and Tyr-576. FER promotes phosphorylation at Tyr-577, Tyr-861 and Tyr-925, even when cells are not adherent. Tyr-397, Tyr-576 and Ser-722 are phosphorylated only when cells are adherent. Phosphorylation at Tyr-397 is important for interaction with BMX, PIK3R1 and SHC1. Phosphorylation at Tyr-925 is important for interaction with GRB2. Dephosphorylated by PTPN11; PTPN11 is recruited to PTK2 via EPHA2 (tyrosine phosphorylated). Microtubule-induced dephosphorylation at Tyr-397 is crucial for the induction of focal adhesion disassembly; this dephosphorylation could be catalyzed by PTPN11 and regulated by ZFYVE21. Phosphorylation on tyrosine residues is enhanced by NTN1. Post-translationally, sumoylated; this enhances autophosphorylation.

The protein resides in the cell junction. The protein localises to the focal adhesion. It localises to the cell membrane. Its subcellular location is the cytoplasm. It is found in the perinuclear region. The protein resides in the cell cortex. The protein localises to the cytoskeleton. It localises to the microtubule organizing center. Its subcellular location is the centrosome. It is found in the nucleus. The protein resides in the cilium basal body. The enzyme catalyses L-tyrosyl-[protein] + ATP = O-phospho-L-tyrosyl-[protein] + ADP + H(+). Subject to autoinhibition, mediated by interactions between the FERM domain and the kinase domain. Activated by autophosphorylation at Tyr-397. This promotes interaction with SRC and phosphorylation at Tyr-576 and Tyr-577 in the kinase activation loop by SRC. Phosphorylation at Tyr-397, Tyr-576 and Tyr-577 is required for maximal kinase activity. In terms of biological role, non-receptor protein-tyrosine kinase that plays an essential role in regulating cell migration, adhesion, spreading, reorganization of the actin cytoskeleton, formation and disassembly of focal adhesions and cell protrusions, cell cycle progression, cell proliferation and apoptosis. Required for early embryonic development and placenta development. Required for embryonic angiogenesis, normal cardiomyocyte migration and proliferation, and normal heart development. Regulates axon growth and neuronal cell migration, axon branching and synapse formation; required for normal development of the nervous system. Plays a role in osteogenesis and differentiation of osteoblasts. Functions in integrin signal transduction, but also in signaling downstream of numerous growth factor receptors, G-protein coupled receptors (GPCR), EPHA2, netrin receptors and LDL receptors. Forms multisubunit signaling complexes with SRC and SRC family members upon activation; this leads to the phosphorylation of additional tyrosine residues, creating binding sites for scaffold proteins, effectors and substrates. Regulates numerous signaling pathways. Promotes activation of phosphatidylinositol 3-kinase and the AKT1 signaling cascade. Promotes activation of MAPK1/ERK2, MAPK3/ERK1 and the MAP kinase signaling cascade. Promotes localized and transient activation of guanine nucleotide exchange factors (GEFs) and GTPase-activating proteins (GAPs), and thereby modulates the activity of Rho family GTPases. Signaling via CAS family members mediates activation of RAC1. Phosphorylates NEDD9 following integrin stimulation. Recruits the ubiquitin ligase MDM2 to P53/TP53 in the nucleus, and thereby regulates P53/TP53 activity, P53/TP53 ubiquitination and proteasomal degradation. Phosphorylates SRC; this increases SRC kinase activity. Phosphorylates ACTN1, ARHGEF7, GRB7, RET and WASL. Promotes phosphorylation of PXN and STAT1; most likely PXN and STAT1 are phosphorylated by a SRC family kinase that is recruited to autophosphorylated PTK2/FAK1, rather than by PTK2/FAK1 itself. Promotes phosphorylation of BCAR1; GIT2 and SHC1; this requires both SRC and PTK2/FAK1. Promotes phosphorylation of BMX and PIK3R1. Does not contain a kinase domain and inhibits PTK2/FAK1 phosphorylation and signaling. Its enhanced expression can attenuate the nuclear accumulation of LPXN and limit its ability to enhance serum response factor (SRF)-dependent gene transcription. The sequence is that of Focal adhesion kinase 1 from Mus musculus (Mouse).